A 323-amino-acid chain; its full sequence is HPr kinase/phosphorylase (323 aa).

Active-site residues include H142 and K163. Residue 157 to 164 (GESGVGKS) participates in ATP binding. Mg(2+) is bound at residue S164. The Proton acceptor; for phosphorylation activity. Proton donor; for dephosphorylation activity role is filled by D181. Positions 205–214 (LEVRGLGMLN) are important for the catalytic mechanism of both phosphorylation and dephosphorylation. E206 contributes to the Mg(2+) binding site. R249 is an active-site residue. An important for the catalytic mechanism of dephosphorylation region spans residues 270–275 (PVAAGR).

The protein belongs to the HPrK/P family. In terms of assembly, homohexamer. Requires Mg(2+) as cofactor.

The catalysed reaction is [HPr protein]-L-serine + ATP = [HPr protein]-O-phospho-L-serine + ADP + H(+). It catalyses the reaction [HPr protein]-O-phospho-L-serine + phosphate + H(+) = [HPr protein]-L-serine + diphosphate. Catalyzes the ATP- as well as the pyrophosphate-dependent phosphorylation of a specific serine residue in HPr, a phosphocarrier protein of the phosphoenolpyruvate-dependent sugar phosphotransferase system (PTS). HprK/P also catalyzes the pyrophosphate-producing, inorganic phosphate-dependent dephosphorylation (phosphorolysis) of seryl-phosphorylated HPr (P-Ser-HPr). The protein is HPr kinase/phosphorylase of Nitrosomonas europaea (strain ATCC 19718 / CIP 103999 / KCTC 2705 / NBRC 14298).